Here is a 235-residue protein sequence, read N- to C-terminus: Phosphoribosylaminoimidazole-succinocarboxamide synthase (235 aa).

It belongs to the SAICAR synthetase family.

The catalysed reaction is 5-amino-1-(5-phospho-D-ribosyl)imidazole-4-carboxylate + L-aspartate + ATP = (2S)-2-[5-amino-1-(5-phospho-beta-D-ribosyl)imidazole-4-carboxamido]succinate + ADP + phosphate + 2 H(+). It participates in purine metabolism; IMP biosynthesis via de novo pathway; 5-amino-1-(5-phospho-D-ribosyl)imidazole-4-carboxamide from 5-amino-1-(5-phospho-D-ribosyl)imidazole-4-carboxylate: step 1/2. This Chlorobaculum parvum (strain DSM 263 / NCIMB 8327) (Chlorobium vibrioforme subsp. thiosulfatophilum) protein is Phosphoribosylaminoimidazole-succinocarboxamide synthase.